A 664-amino-acid polypeptide reads, in one-letter code: Translation factor guf1, mitochondrial (664 aa).

Residues 1–43 (MRGCLQLARWLSAGPKCPAASLPKAPSGLYNTIRSFTSSAQLA) constitute a mitochondrion transit peptide. Residues 66 to 246 (DRYRNFCIVA…TVVEKIPAPV (181 aa)) enclose the tr-type G domain. Residues 75–82 (AHVDHGKS), 139–143 (DTPGH), and 193–196 (NKVD) each bind GTP.

The protein belongs to the TRAFAC class translation factor GTPase superfamily. Classic translation factor GTPase family. LepA subfamily.

The protein resides in the mitochondrion inner membrane. It catalyses the reaction GTP + H2O = GDP + phosphate + H(+). Its function is as follows. Promotes mitochondrial protein synthesis. May act as a fidelity factor of the translation reaction, by catalyzing a one-codon backward translocation of tRNAs on improperly translocated ribosomes. Binds to mitochondrial ribosomes in a GTP-dependent manner. The sequence is that of Translation factor guf1, mitochondrial (guf1) from Aspergillus oryzae (strain ATCC 42149 / RIB 40) (Yellow koji mold).